Consider the following 252-residue polypeptide: Adaptation to cold protein B (252 aa).

As to quaternary structure, interacts with AtcC, but not with AtcA and AtcJ. Interacts with the RNA polymerase subunits RpoB and RpoC.

Its function is as follows. Involved in cold adaptation. Directly interacts with the RNA polymerase and decreases its activity. May direct the DnaK chaperone to the RNA polymerase to sustain life at low temperatures. Overproduction prevents bacterial growth due to RNA polymerase inhibition. This is Adaptation to cold protein B from Shewanella oneidensis (strain ATCC 700550 / JCM 31522 / CIP 106686 / LMG 19005 / NCIMB 14063 / MR-1).